The chain runs to 262 residues: Tryptophan synthase alpha chain (262 aa).

Residues Glu51 and Asp62 each act as proton acceptor in the active site.

This sequence belongs to the TrpA family. As to quaternary structure, tetramer of two alpha and two beta chains.

It carries out the reaction (1S,2R)-1-C-(indol-3-yl)glycerol 3-phosphate + L-serine = D-glyceraldehyde 3-phosphate + L-tryptophan + H2O. Its pathway is amino-acid biosynthesis; L-tryptophan biosynthesis; L-tryptophan from chorismate: step 5/5. The alpha subunit is responsible for the aldol cleavage of indoleglycerol phosphate to indole and glyceraldehyde 3-phosphate. The sequence is that of Tryptophan synthase alpha chain from Oceanobacillus iheyensis (strain DSM 14371 / CIP 107618 / JCM 11309 / KCTC 3954 / HTE831).